The following is a 261-amino-acid chain: MRRKTVLDFAKGRGPYVWITAYDYPTAKAVDEAGVDGILVGDSLGMVLLGLPNTLGVTMEDMVRHTEAVARAKPRALVVADMPFMSYETGPEDALKNAARLIRAGADAVKLEGGAEYAHIVERLVKAGIPVMGHIGLTPQRVLTIGGFRMVGKTEEQRRKVLEDAKALRDAGAFSIVLEFVPASLAREVTQAVDIPTICIGSGPHCDGQILVLHDVIGLSERPPSFAKRYADVAAAIREAVSKYAEEVRKGLFPAREHYRE.

The Mg(2+) site is built by Asp-42 and Asp-81. Residues 42–43 (DS), Asp-81, and Lys-110 each bind 3-methyl-2-oxobutanoate. Residue Glu-112 coordinates Mg(2+). Glu-179 serves as the catalytic Proton acceptor.

It belongs to the PanB family. As to quaternary structure, homodecamer; pentamer of dimers. Mg(2+) is required as a cofactor.

Its subcellular location is the cytoplasm. It carries out the reaction 3-methyl-2-oxobutanoate + (6R)-5,10-methylene-5,6,7,8-tetrahydrofolate + H2O = 2-dehydropantoate + (6S)-5,6,7,8-tetrahydrofolate. It participates in cofactor biosynthesis; coenzyme A biosynthesis. Functionally, catalyzes the reversible reaction in which hydroxymethyl group from 5,10-methylenetetrahydrofolate is transferred onto alpha-ketoisovalerate to form ketopantoate. The chain is 3-methyl-2-oxobutanoate hydroxymethyltransferase from Pyrobaculum islandicum (strain DSM 4184 / JCM 9189 / GEO3).